The chain runs to 671 residues: Amidase chry2 (671 aa).

Cys-2 (nucleophile) is an active-site residue. Positions 2–220 constitute a Glutamine amidotransferase type-2 domain; the sequence is CGISAFITHP…PGHYLICRPN (219 aa). The Asparagine synthetase domain occupies 251–639; that stretch reads VRERLLEAVR…TQDAMDGAFN (389 aa).

It belongs to the asparagine synthetase family.

Its pathway is pigment biosynthesis. In terms of biological role, amidase; part of the gene cluster that mediates the biosynthesis of the yellow pigment chrysogine. Pyruvic acid and anthranilic acid are likely substrates for the nonribosomal peptide synthetase chry1/NRPS14, with pyruvic acid adenylated by the first A domain and anthranilic acid by the second. If pyruvic acid and anthranilic acid are merged and released from chry1/NRPS14 by hydrolysis, a subsequent amidation would lead to 2-pyruvoylaminobenzamide. This process is probably catalyzed by the amidotransferase chry2 using glutamine as amino donor. The dehydrogenase chry5 that has a terminal berberine bridge domain for C-N cyclization could catalyze the cyclization of 2-pyruvoylaminobenzamide to yield acetyl-4(3H)-quinazolidinone. A final reduction of acetyl-4(3H)-quinazolidinone catalyzed by the oxidoreductase chry4 would result in chrysogine. The protein is Amidase chry2 of Gibberella zeae (strain ATCC MYA-4620 / CBS 123657 / FGSC 9075 / NRRL 31084 / PH-1) (Wheat head blight fungus).